Here is a 56-residue protein sequence, read N- to C-terminus: uncharacterized protein (56 aa).

The helical transmembrane segment at 12 to 32 threads the bilayer; it reads GITLFPYFAILILILAILVVG. Positions 19–31 are hydrophobic; sequence FAILILILAILVV.

The protein localises to the membrane. This is an uncharacterized protein from Chenopodium amaranticolor (Quinoa).